A 354-amino-acid polypeptide reads, in one-letter code: Sulfate/thiosulfate import ATP-binding protein CysA (354 aa).

The 235-residue stretch at 3–237 (IEVRGLSKRF…PATPFVYGFL (235 aa)) folds into the ABC transporter domain. Position 35–42 (35–42 (GPSGCGKT)) interacts with ATP.

It belongs to the ABC transporter superfamily. Sulfate/tungstate importer (TC 3.A.1.6) family. As to quaternary structure, the complex is composed of two ATP-binding proteins (CysA), two transmembrane proteins (CysT and CysW) and a solute-binding protein (CysP).

It localises to the cell inner membrane. The enzyme catalyses sulfate(out) + ATP + H2O = sulfate(in) + ADP + phosphate + H(+). The catalysed reaction is thiosulfate(out) + ATP + H2O = thiosulfate(in) + ADP + phosphate + H(+). Its function is as follows. Part of the ABC transporter complex CysAWTP involved in sulfate/thiosulfate import. Responsible for energy coupling to the transport system. This Bordetella parapertussis (strain 12822 / ATCC BAA-587 / NCTC 13253) protein is Sulfate/thiosulfate import ATP-binding protein CysA.